The following is a 118-amino-acid chain: UPF0058 protein MJ1132 (118 aa).

The protein belongs to the UPF0058 family.

This Methanocaldococcus jannaschii (strain ATCC 43067 / DSM 2661 / JAL-1 / JCM 10045 / NBRC 100440) (Methanococcus jannaschii) protein is UPF0058 protein MJ1132.